We begin with the raw amino-acid sequence, 136 residues long: General odorant-binding protein 57d (136 aa).

Residues 1–29 (MPEKMSLRLVPHLACIIFILEIQFRIADS) form the signal peptide. Intrachain disulfides connect C33/C70, C66/C118, and C107/C127.

It belongs to the PBP/GOBP family.

Functionally, present in the aqueous fluid surrounding olfactory sensory dendrites and are thought to aid in the capture and transport of hydrophobic odorants into and through this fluid. The chain is General odorant-binding protein 57d from Drosophila melanogaster (Fruit fly).